We begin with the raw amino-acid sequence, 526 residues long: Collagen alpha-2(I) chain (526 aa).

Positions 1–291 (GFPGEKGPSG…PRSPPSLRPK (291 aa)) are disordered. Composition is skewed to low complexity over residues 9 to 36 (SGEAGTAGPPGTPGPQGLLGAPGILGLP), 44 to 81 (LPGVAGALGEPGPLGIAGPPGARGPPGAVGSPGVNGAP), and 110 to 131 (YPGNAGPVGAAGAPGPQGSVGP). Residues 165–176 (RGDKGEPGDKGP) are compositionally biased toward basic and acidic residues. A compositionally biased stretch (pro residues) spans 249–261 (AGPPGPPGPPGPP). Residues 263–526 (ASGGGYDFGY…YVDVGPVCFK (264 aa)) constitute a propeptide, C-terminal propeptide. One can recognise a Fibrillar collagen NC1 domain in the interval 293–526 (YEVDATLKSL…YVDVGPVCFK (234 aa)). 3 disulfide bridges follow: Cys-323–Cys-355, Cys-363–Cys-524, and Cys-432–Cys-477. Ca(2+) is bound by residues Asp-341, Asn-343, Gln-344, Cys-346, and Asp-349.

The protein belongs to the fibrillar collagen family. Trimers of one alpha 2(I) and two alpha 1(I) chains. Interacts (via C-terminus) with TMEM131 (via PapD-L domain); the interaction is direct and is involved in assembly and TRAPPIII ER-to-Golgi transport complex-dependent secretion of collagen. In terms of processing, prolines at the third position of the tripeptide repeating unit (G-X-Y) are hydroxylated in some or all of the chains. As to expression, forms the fibrils of tendon, ligaments and bones. In bones the fibrils are mineralized with calcium hydroxyapatite.

Its subcellular location is the secreted. The protein localises to the extracellular space. It is found in the extracellular matrix. Functionally, type I collagen is a member of group I collagen (fibrillar forming collagen). In Oryctolagus cuniculus (Rabbit), this protein is Collagen alpha-2(I) chain (COL1A2).